Consider the following 220-residue polypeptide: MHADFWQQRWRAGQIGFHQAQVNQDLQQYWPRLGLAPEARVLVPLCGKSQDMSWLIGQGCHVVGAELSETAVESYFSEHGVQPQITRQGDFSVYAAPGIEIWCGDFFALTSQDIGHCTAFYDRAALIALPADLRERYVQQLEALMPRECNGLLITLDYDQSRLEGPPFSVPPTWLQAFVSGNWNITKVGEHDALHSSPKALKAGVERLDEQVYVLARKLR.

S-adenosyl-L-methionine is bound by residues Trp-10, Leu-45, Glu-66, and Arg-123.

Belongs to the class I-like SAM-binding methyltransferase superfamily. TPMT family.

It is found in the cytoplasm. The catalysed reaction is S-adenosyl-L-methionine + a thiopurine = S-adenosyl-L-homocysteine + a thiopurine S-methylether.. The protein is Thiopurine S-methyltransferase of Pseudomonas syringae pv. tomato (strain ATCC BAA-871 / DC3000).